The following is a 163-amino-acid chain: NADH-quinone oxidoreductase subunit I (163 aa).

2 consecutive 4Fe-4S ferredoxin-type domains span residues 54–84 (LRRY…IDAE) and 94–123 (TRYD…EGPN). [4Fe-4S] cluster contacts are provided by Cys-64, Cys-67, Cys-70, Cys-74, Cys-103, Cys-106, Cys-109, and Cys-113.

It belongs to the complex I 23 kDa subunit family. NDH-1 is composed of at least 14 different subunits, Nqo1 to Nqo14. The complex has a L-shaped structure, with the hydrophobic arm (subunits Nqo7, Nqo8, Nqo10 to Nqo14) embedded in the inner membrane and the hydrophilic peripheral arm (subunits Nqo1 to Nqo6, Nqo9) protruding into the bacterial cytoplasm. The hydrophilic domain contains all the redox centers. NADH-quinone oxidoreductase forms a supercomplex with ubiquinol-cytochrome c reductase complex (complex III or cytochrome b-c1 complex) and cytochrome c oxidase (complex IV), which stabilizes the NADH-quinone oxidoreductase complex. [4Fe-4S] cluster serves as cofactor.

Its subcellular location is the cell inner membrane. It catalyses the reaction a quinone + NADH + 5 H(+)(in) = a quinol + NAD(+) + 4 H(+)(out). In terms of biological role, NDH-1 shuttles electrons from NADH, via FMN and iron-sulfur (Fe-S) centers, to quinones in the respiratory chain. The immediate electron acceptor for the enzyme in this species is believed to be ubiquinone. Couples the redox reaction to proton translocation (for every two electrons transferred, four hydrogen ions are translocated across the cytoplasmic membrane), and thus conserves the redox energy in a proton gradient. This Paracoccus denitrificans (strain Pd 1222) protein is NADH-quinone oxidoreductase subunit I.